The chain runs to 187 residues: GTP cyclohydrolase 1 (187 aa).

The Zn(2+) site is built by Cys-74, His-77, and Cys-145.

Belongs to the GTP cyclohydrolase I family. In terms of assembly, homomer.

It carries out the reaction GTP + H2O = 7,8-dihydroneopterin 3'-triphosphate + formate + H(+). The protein operates within cofactor biosynthesis; 7,8-dihydroneopterin triphosphate biosynthesis; 7,8-dihydroneopterin triphosphate from GTP: step 1/1. The polypeptide is GTP cyclohydrolase 1 (Sulfurihydrogenibium sp. (strain YO3AOP1)).